The following is a 132-amino-acid chain: Small ribosomal subunit protein uS8c (132 aa).

The protein belongs to the universal ribosomal protein uS8 family. As to quaternary structure, part of the 30S ribosomal subunit.

It is found in the plastid. The protein resides in the chloroplast. Functionally, one of the primary rRNA binding proteins, it binds directly to 16S rRNA central domain where it helps coordinate assembly of the platform of the 30S subunit. In Adiantum capillus-veneris (Maidenhair fern), this protein is Small ribosomal subunit protein uS8c (rps8).